Reading from the N-terminus, the 757-residue chain is MDVNPTLLFLKVPVQNAISTTFPYTGDPPYSHGTGTGYTMDTVNRTHQYSEKGKWTTNTETGAPQLNPIDGPLPEDNEPSGYAQTDCVLEAMAFLEESHPGIFENSCLETMEIVQQTRVDKLTQGRQTYDWTLNRNQPAATALANTIEIFRSNGLTANESGRLIDFLKDVMESMDKEDMEITTHFQRKRRVRDNMTKKMVTQRTIGKKKQRLNKKSYLIRALTLNTMTKDAERGKLKRRAIATPGMQIRGFVYFVETLARSICEKLEQSGLPVGGNEKKAKLANVVRKMMTNSQDTELSFTITGDNTKWNENQNPRMFLAMITYITRNQPEWFRNVLSIAPIMFSNKMARLGKGYMFESKSMKLRTQIPAEMLANIDLKYFNELTKKKIEKIRPLLIDGTASLSPGMMMGMFNMLSTVLGVSILNLGQKRYTKTTYWWDGLQSSDDFALIVNAPNHEGIQAGVDRFYRTCKLVGINMSKKKSYINRTGTFEFTSFFYRYGFVANFSMELPSFGVSGINESADMSIGVTVIKNNMINNDLGPATAQMALQLFIKDYRYTYRCHRGDTQIQTRRSFELKKLWEQTRSKAGLLVSDGGPNLYNIRNLHIPEVCLKWELMDEDYQGRLCNPLNPFVSHKEIESVNNAVVMPAHGPAKSMEYDAVATTHSWIPKRNRSILNTSQRGILEDEQMYQKCCNLFEKFFPSSSYRRPVGISSMVEAMVSRARIDARIDFESGRIKKEEFAEIMKICSTIEELRRQK.

The interval Lys-52–Tyr-82 is disordered. Positions Trp-55–Pro-64 are enriched in polar residues. 2 consecutive short sequence motifs (nuclear localization signal) follow at residues Arg-187–Met-195 and Arg-203–Ser-216. A promoter-binding site region spans residues Arg-249 to Glu-256. Residues Val-286–Tyr-483 form the RdRp catalytic domain.

It belongs to the influenza viruses polymerase PB1 family. In terms of assembly, influenza RNA polymerase is composed of three subunits: PB1, PB2 and PA. Interacts (via N-terminus) with PA (via C-terminus). Interacts (via C-terminus) with PB2 (via N-terminus); this interaction is essential for transcription initiation. In terms of processing, phosphorylated by host PRKCA.

Its subcellular location is the host nucleus. The protein localises to the host cytoplasm. It catalyses the reaction RNA(n) + a ribonucleoside 5'-triphosphate = RNA(n+1) + diphosphate. RNA-dependent RNA polymerase which is responsible for replication and transcription of virus RNA segments. The transcription of viral mRNAs occurs by a unique mechanism called cap-snatching. 5' methylated caps of cellular mRNAs are cleaved after 10-13 nucleotides by PA. In turn, these short capped RNAs are used as primers by PB1 for transcription of viral mRNAs. During virus replication, PB1 initiates RNA synthesis and copy vRNA into complementary RNA (cRNA) which in turn serves as a template for the production of more vRNAs. The polypeptide is RNA-directed RNA polymerase catalytic subunit (Aves (Cat)).